A 299-amino-acid polypeptide reads, in one-letter code: Probable lipid kinase YegS-like (299 aa).

Residues 1–129 (MSERKALLIL…IDLGEVGGQM (129 aa)) form the DAGKc domain. Residues Thr39, 65-71 (GDGTLRD), and Thr92 contribute to the ATP site. Leu210, Asp213, and Leu215 together coordinate Mg(2+). Glu268 functions as the Proton acceptor in the catalytic mechanism.

The protein belongs to the diacylglycerol/lipid kinase family. YegS lipid kinase subfamily. Mg(2+) serves as cofactor. Ca(2+) is required as a cofactor.

It localises to the cytoplasm. In terms of biological role, probably phosphorylates lipids; the in vivo substrate is unknown. The polypeptide is Probable lipid kinase YegS-like (Pseudomonas fluorescens (strain ATCC BAA-477 / NRRL B-23932 / Pf-5)).